We begin with the raw amino-acid sequence, 267 residues long: tRNA (guanine-N(1)-)-methyltransferase (267 aa).

Residues glycine 112 and 131–136 (IGDYIL) each bind S-adenosyl-L-methionine. Over residues 245–259 (DRRKEKNSYEDEFNR) the composition is skewed to basic and acidic residues. Positions 245-267 (DRRKEKNSYEDEFNRRNYKRSTS) are disordered.

The protein belongs to the RNA methyltransferase TrmD family. Homodimer.

It is found in the cytoplasm. It carries out the reaction guanosine(37) in tRNA + S-adenosyl-L-methionine = N(1)-methylguanosine(37) in tRNA + S-adenosyl-L-homocysteine + H(+). Specifically methylates guanosine-37 in various tRNAs. This is tRNA (guanine-N(1)-)-methyltransferase from Spiroplasma kunkelii.